The chain runs to 95 residues: Histone-like DNA-binding protein (95 aa).

The protein belongs to the bacterial histone-like protein family.

The chain is Histone-like DNA-binding protein from Rickettsia montanensis.